Reading from the N-terminus, the 113-residue chain is Flagellar hook-basal body complex protein FliE (113 aa).

This sequence belongs to the FliE family.

The protein resides in the bacterial flagellum basal body. This Rhizobium leguminosarum bv. trifolii (strain WSM2304) protein is Flagellar hook-basal body complex protein FliE.